Here is a 49-residue protein sequence, read N- to C-terminus: Large ribosomal subunit protein bL33B (49 aa).

Belongs to the bacterial ribosomal protein bL33 family.

The polypeptide is Large ribosomal subunit protein bL33B (rpmG2) (Lactococcus lactis subsp. cremoris (Streptococcus cremoris)).